We begin with the raw amino-acid sequence, 442 residues long: MNCDRICELPDSLLTQVLSYLPTIDSVKTSVLSKRWEFLWLRVPVLDLKVSDFPDENYASFIDNFLEFNRKSRMRKFKLKYDEYTYDDDRLAGWVVTTVDRGIQHLDAKGFETNMCVREFMPQNIYKCNTLVSLMLVTVGIENPEFVVSLPSLKIMHLEDVWYYDDPLIMEKIISGCPVLEDFVLIRPIDFCNLDVLQFLRVRSLSLRSFRLTFEYSVSCTYFSVEIDAPRLEYLNFNDDQSDTIVVKNMTSLSMIDIDSEFNVKFGGSRLEPGDLRKRDIIRDFLTAISCVRHMIISRRTLEVLDRYSKLVPIPKFDNLYRLQAAVSRSMLQLLLVFLESCPNLENLILDFTVSTEPEQDGLTYVPQCLLSSLECVEIRELIMGEETGEKLVRYFLKNSVVLKKLILRLEDSSIANQDSDIFKELSTFTKRSRSCEVIIIH.

The F-box domain maps to 3–49; sequence CDRICELPDSLLTQVLSYLPTIDSVKTSVLSKRWEFLWLRVPVLDLK. LRR repeat units lie at residues 128 to 160, 162 to 187, 188 to 214, 234 to 260, 278 to 309, and 324 to 352; these read CNTLVSLMLVTVGIENPEFVVSLPSLKIMHLED, WYYDDPLIMEKIISGCPVLEDFVLIR, PIDFCNLDVLQFLRVRSLSLRSFRLTF, YLNFNDDQSDTIVVKNMTSLSMIDIDS, KRDIIRDFLTAISCVRHMIISRRTLEVLDRYS, and QAAVSRSMLQLLLVFLESCPNLENLILDF. An FBD domain is found at 358–410; it reads PEQDGLTYVPQCLLSSLECVEIRELIMGEETGEKLVRYFLKNSVVLKKLILRL.

In Arabidopsis thaliana (Mouse-ear cress), this protein is F-box/FBD/LRR-repeat protein At2g26030.